The chain runs to 168 residues: INO80 complex subunit 3 (168 aa).

Positions 115–129 (TNSTLSTPKSFHSPL) are enriched in polar residues. The segment at 115–168 (TNSTLSTPKSFHSPLQSRGISPSSAQSSAAVSSSRKQKRKRTSEGPSERRARKK) is disordered. Residues 130-148 (QSRGISPSSAQSSAAVSSS) are compositionally biased toward low complexity. The span at 156–168 (TSEGPSERRARKK) shows a compositional bias: basic and acidic residues.

In terms of assembly, component of the INO80 chromatin remodeling complex.

The protein resides in the nucleus. In terms of biological role, component of the INO80 complex which remodels chromatin by shifting nucleosomes and is involved in DNA repair. The chain is INO80 complex subunit 3 (iec3) from Schizosaccharomyces pombe (strain 972 / ATCC 24843) (Fission yeast).